The following is a 407-amino-acid chain: S-adenosylmethionine synthase (407 aa).

Histidine 19 contributes to the ATP binding site. A Mg(2+)-binding site is contributed by aspartate 21. K(+) is bound at residue glutamate 47. L-methionine is bound by residues glutamate 60 and glutamine 103. The segment at glutamine 103–threonine 113 is flexible loop. Residues alanine 108–alanine 131 are disordered. ATP is bound by residues aspartate 178–lysine 180, aspartate 258, arginine 264–lysine 265, alanine 281, and lysine 285. Residue aspartate 258 participates in L-methionine binding. Lysine 289 provides a ligand contact to L-methionine.

This sequence belongs to the AdoMet synthase family. Homotetramer; dimer of dimers. Mg(2+) serves as cofactor. The cofactor is K(+).

The protein resides in the cytoplasm. The catalysed reaction is L-methionine + ATP + H2O = S-adenosyl-L-methionine + phosphate + diphosphate. It participates in amino-acid biosynthesis; S-adenosyl-L-methionine biosynthesis; S-adenosyl-L-methionine from L-methionine: step 1/1. In terms of biological role, catalyzes the formation of S-adenosylmethionine (AdoMet) from methionine and ATP. The overall synthetic reaction is composed of two sequential steps, AdoMet formation and the subsequent tripolyphosphate hydrolysis which occurs prior to release of AdoMet from the enzyme. The sequence is that of S-adenosylmethionine synthase from Corynebacterium efficiens (strain DSM 44549 / YS-314 / AJ 12310 / JCM 11189 / NBRC 100395).